We begin with the raw amino-acid sequence, 309 residues long: ADP-L-glycero-D-manno-heptose-6-epimerase (309 aa).

NADP(+) is bound by residues 10–11 (FI), 31–32 (DN), K38, K53, 75–79 (EGACS), and N92. The Proton acceptor role is filled by Y140. NADP(+) is bound at residue K144. N169 lines the substrate pocket. Residues V170 and K178 each contribute to the NADP(+) site. The active-site Proton acceptor is the K178. Residues S180, H187, 201-204 (FEGS), R209, and Y272 each bind substrate.

The protein belongs to the NAD(P)-dependent epimerase/dehydratase family. HldD subfamily. As to quaternary structure, homopentamer. Requires NADP(+) as cofactor.

It carries out the reaction ADP-D-glycero-beta-D-manno-heptose = ADP-L-glycero-beta-D-manno-heptose. The protein operates within nucleotide-sugar biosynthesis; ADP-L-glycero-beta-D-manno-heptose biosynthesis; ADP-L-glycero-beta-D-manno-heptose from D-glycero-beta-D-manno-heptose 7-phosphate: step 4/4. Its function is as follows. Catalyzes the interconversion between ADP-D-glycero-beta-D-manno-heptose and ADP-L-glycero-beta-D-manno-heptose via an epimerization at carbon 6 of the heptose. The chain is ADP-L-glycero-D-manno-heptose-6-epimerase from Enterobacter sp. (strain 638).